The primary structure comprises 195 residues: Protein GrpE (195 aa).

The segment covering 1-18 has biased composition (basic and acidic residues); that stretch reads MDPKEKKTKQEEELKVDD. Residues 1-41 are disordered; sequence MDPKEKKTKQEEELKVDDIQDTVEGQSQNEEATEATEPLTA.

It belongs to the GrpE family. Homodimer.

Its subcellular location is the cytoplasm. Participates actively in the response to hyperosmotic and heat shock by preventing the aggregation of stress-denatured proteins, in association with DnaK and GrpE. It is the nucleotide exchange factor for DnaK and may function as a thermosensor. Unfolded proteins bind initially to DnaJ; upon interaction with the DnaJ-bound protein, DnaK hydrolyzes its bound ATP, resulting in the formation of a stable complex. GrpE releases ADP from DnaK; ATP binding to DnaK triggers the release of the substrate protein, thus completing the reaction cycle. Several rounds of ATP-dependent interactions between DnaJ, DnaK and GrpE are required for fully efficient folding. This is Protein GrpE from Bacteroides fragilis (strain ATCC 25285 / DSM 2151 / CCUG 4856 / JCM 11019 / LMG 10263 / NCTC 9343 / Onslow / VPI 2553 / EN-2).